We begin with the raw amino-acid sequence, 231 residues long: ATP phosphoribosyltransferase (231 aa).

It belongs to the ATP phosphoribosyltransferase family. Short subfamily. In terms of assembly, heteromultimer composed of HisG and HisZ subunits.

The protein resides in the cytoplasm. The enzyme catalyses 1-(5-phospho-beta-D-ribosyl)-ATP + diphosphate = 5-phospho-alpha-D-ribose 1-diphosphate + ATP. Its pathway is amino-acid biosynthesis; L-histidine biosynthesis; L-histidine from 5-phospho-alpha-D-ribose 1-diphosphate: step 1/9. Catalyzes the condensation of ATP and 5-phosphoribose 1-diphosphate to form N'-(5'-phosphoribosyl)-ATP (PR-ATP). Has a crucial role in the pathway because the rate of histidine biosynthesis seems to be controlled primarily by regulation of HisG enzymatic activity. This Rhizobium meliloti (strain 1021) (Ensifer meliloti) protein is ATP phosphoribosyltransferase (hisG).